The primary structure comprises 127 residues: Large ribosomal subunit protein bL20 (127 aa).

It belongs to the bacterial ribosomal protein bL20 family.

Its function is as follows. Binds directly to 23S ribosomal RNA and is necessary for the in vitro assembly process of the 50S ribosomal subunit. It is not involved in the protein synthesizing functions of that subunit. In Bifidobacterium adolescentis (strain ATCC 15703 / DSM 20083 / NCTC 11814 / E194a), this protein is Large ribosomal subunit protein bL20.